Reading from the N-terminus, the 329-residue chain is Phenylalanine--tRNA ligase alpha subunit (329 aa).

E253 is a binding site for Mg(2+).

The protein belongs to the class-II aminoacyl-tRNA synthetase family. Phe-tRNA synthetase alpha subunit type 1 subfamily. In terms of assembly, tetramer of two alpha and two beta subunits. Mg(2+) is required as a cofactor.

The protein localises to the cytoplasm. The enzyme catalyses tRNA(Phe) + L-phenylalanine + ATP = L-phenylalanyl-tRNA(Phe) + AMP + diphosphate + H(+). This is Phenylalanine--tRNA ligase alpha subunit from Teredinibacter turnerae (strain ATCC 39867 / T7901).